Reading from the N-terminus, the 516-residue chain is D-aminopeptidase (516 aa).

Serine 61 (nucleophile) is an active-site residue. The Proton donor/acceptor role is filled by lysine 64. An important for specificity region spans residues 476–486 (RRSMDAPAPGD). Aspartate 480 provides a ligand contact to substrate.

It belongs to the peptidase S12 family. Homodimer.

The enzyme catalyses Release of an N-terminal D-amino acid from a peptide, Xaa-|-Yaa-, in which Xaa is preferably D-Ala, D-Ser or D-Thr. D-amino acid amides and methyl esters also are hydrolyzed, as is glycine amide.. With respect to regulation, inhibited by beta-lactam compounds such as 6-aminopenicillic acid, 7-aminocephalosporanic acid, benzylpenicillin and ampicillin. Inhibited by p-chloromercuribenzoate. Its function is as follows. Hydrolyzes N-terminal residues in D-amino acid-containing peptides. This Cereibacter sphaeroides (strain KD131 / KCTC 12085) (Rhodobacter sphaeroides) protein is D-aminopeptidase.